We begin with the raw amino-acid sequence, 604 residues long: MPLAMLLLLLLLLSPDSQTAHGHPLYTRLSPGALQVLSAQGTQALQAAQRSAQWAIKRVLMEIQHRLHECQGPGRPRPQAPLLQDPPEPVQCGERHQGVANTTRAHGRIVGGSTAPSGAWPWLVRLQLGGLPLCGGVLVAASWVLTAAHCFAGASNELLWTVMLAEGPQGEQAEEVQVNRILPHPKFDPQTFHNDLALVQLWTPVSPEGPARPICLPQGSREPPAGTPCAIAGWGALFEDGPESEAVREARVPLLSADTCQKVLGPGLRPSTMLCAGYLAGGIDSCQGDSGGPLTCSEPGPRPREVLFGVTSWGDGCGEPGKPGVYTRVTVFKDWLQEQMSAGPSTREPSCRELLNWNAREEEPFTDAPGLCAFYARQCLGSESSCARLALQQCLQRRRRCELRSLAHTLLGLLRGAQELLGPRPGLRRGVSAPARSAPSLQELPGHNPREQRLYSGSRIAGTWLQKPKPERRPETKGCPGLEPLQQKLAAIQRAHAWILQIPAEHLAMNFHEVLADLGSKTLTGLFRAWVRAGLGDQRVVFSGLVGLEPSTLAHSLPRLLVQALKAFRSASLTEGEPQAPWIGADQGQRLGKERQGQLQPPVP.

The first 22 residues, 1 to 22 (MPLAMLLLLLLLLSPDSQTAHG), serve as a signal peptide directing secretion. The disordered stretch occupies residues 70–94 (CQGPGRPRPQAPLLQDPPEPVQCGE). Pro residues predominate over residues 75–89 (RPRPQAPLLQDPPEP). Residue Asn-101 is glycosylated (N-linked (GlcNAc...) asparagine). Positions 109–341 (IVGGSTAPSG…FKDWLQEQMS (233 aa)) constitute a Peptidase S1 domain. A disulfide bridge links Cys-134 with Cys-150. Catalysis depends on charge relay system residues His-149 and Asp-195. 3 disulfides stabilise this stretch: Cys-229–Cys-296, Cys-260–Cys-275, and Cys-286–Cys-317. Catalysis depends on Ser-290, which acts as the Charge relay system. Disordered regions lie at residues 424-452 (RPGLRRGVSAPARSAPSLQELPGHNPREQ) and 578-604 (PQAPWIGADQGQRLGKERQGQLQPPVP).

This sequence belongs to the peptidase S1 family. As to expression, expressed in the eye: present in the retina and in the optic nerve.

The protein resides in the endoplasmic reticulum membrane. In terms of biological role, serine protease required during eye development. In Mus musculus (Mouse), this protein is Serine protease 56 (Prss56).